Here is a 383-residue protein sequence, read N- to C-terminus: Glutamate 5-kinase (383 aa).

K17 is an ATP binding site. 3 residues coordinate substrate: S64, D151, and N165. ATP is bound at residue 185–186 (SD). Positions 291–367 (SGTIRVDAGA…DEIEGILGYN (77 aa)) constitute a PUA domain.

Belongs to the glutamate 5-kinase family.

The protein resides in the cytoplasm. The enzyme catalyses L-glutamate + ATP = L-glutamyl 5-phosphate + ADP. It functions in the pathway amino-acid biosynthesis; L-proline biosynthesis; L-glutamate 5-semialdehyde from L-glutamate: step 1/2. In terms of biological role, catalyzes the transfer of a phosphate group to glutamate to form L-glutamate 5-phosphate. The chain is Glutamate 5-kinase from Methanosarcina barkeri (strain Fusaro / DSM 804).